Reading from the N-terminus, the 430-residue chain is Acylsugar acyltransferase 3 (430 aa).

Residues histidine 155 and aspartate 367 each act as proton acceptor in the active site.

It belongs to the plant acyltransferase family. Monomer. Expressed in tip cells of type I trichomes of stems and petioles, sites of acylsugars production.

In terms of biological role, catalyzes the transfer of short (four to five carbons) branched acyl chains to the furanose ring of di-acylsucrose acceptors to produce tri-acylsucroses such as S3:15 (5,5,5), S4:17 (2,5,5,5) and S4:24 (2,5,5,12) acylsucroses. This is Acylsugar acyltransferase 3 from Solanum lycopersicum (Tomato).